The primary structure comprises 499 residues: Pleckstrin homology domain-containing family O member 2 (499 aa).

Basic and acidic residues predominate over residues 1-11 (MEEEGVKEGGQ). Residues 1 to 21 (MEEEGVKEGGQRPRSAQTADK) form a disordered region. A PH domain is found at 18–119 (TADKAGWIKK…WIKALNEGIN (102 aa)). A Phosphoserine modification is found at serine 167. The interval 170-419 (LSRLDLDVPD…RRRQPGEQLH (250 aa)) is disordered. Pro residues predominate over residues 201–212 (RPPMPPAKPSPA). A compositionally biased stretch (low complexity) spans 229 to 238 (SAPAPVPASS). Serine 237 and serine 238 each carry phosphoserine. Over residues 246–258 (EDLETPVVEDSDS) the composition is skewed to acidic residues. Serine 273 carries the post-translational modification Phosphoserine. Residues threonine 298 and threonine 311 each carry the phosphothreonine modification. 2 stretches are compositionally biased toward low complexity: residues 329-349 (EASGPAQSPGASEASAPGPAE) and 367-386 (AAGPPGTPPKAATTSTTLPP). A Phosphoserine modification is found at serine 399. Positions 416–492 (EQLHRAQLEV…LREKRRELVT (77 aa)) form a coiled coil.

This Bos taurus (Bovine) protein is Pleckstrin homology domain-containing family O member 2 (PLEKHO2).